We begin with the raw amino-acid sequence, 523 residues long: uncharacterized protein (523 aa).

A chloroplast-targeting transit peptide spans M1–A63. A run of 3 helical transmembrane segments spans residues V180–L200, A386–L406, and I423–F443.

The protein localises to the plastid. Its subcellular location is the chloroplast membrane. This is an uncharacterized protein from Arabidopsis thaliana (Mouse-ear cress).